We begin with the raw amino-acid sequence, 80 residues long: Waprin-Phi3 (80 aa).

The first 22 residues, Met1–Ala22, serve as a signal peptide directing secretion. The 48-residue stretch at Pro31–Gly78 folds into the WAP domain. 4 disulfides stabilise this stretch: Cys38-Cys66, Cys49-Cys70, Cys53-Cys65, and Cys59-Cys74.

This sequence belongs to the venom waprin family. Expressed by the venom gland.

The protein localises to the secreted. Its function is as follows. Damages membranes of susceptible bacteria. Has no hemolytic activity. Not toxic to mice. Does not inhibit the proteinases elastase and cathepsin G. In Philodryas olfersii (Green snake), this protein is Waprin-Phi3.